A 429-amino-acid chain; its full sequence is Queuine tRNA-ribosyltransferase accessory subunit 2 (429 aa).

Positions 330, 332, 335, and 361 each coordinate Zn(2+).

The protein belongs to the queuine tRNA-ribosyltransferase family. QTRT2 subfamily. As to quaternary structure, heterodimer of a catalytic subunit and an accessory subunit. The cofactor is Zn(2+).

It is found in the cytoplasm. Non-catalytic subunit of the queuine tRNA-ribosyltransferase (TGT) that catalyzes the base-exchange of a guanine (G) residue with queuine (Q) at position 34 (anticodon wobble position) in tRNAs with GU(N) anticodons (tRNA-Asp, -Asn, -His and -Tyr), resulting in the hypermodified nucleoside queuosine (7-(((4,5-cis-dihydroxy-2-cyclopenten-1-yl)amino)methyl)-7-deazaguanosine). In Culex quinquefasciatus (Southern house mosquito), this protein is Queuine tRNA-ribosyltransferase accessory subunit 2.